Here is a 257-residue protein sequence, read N- to C-terminus: 3-deoxy-manno-octulosonate cytidylyltransferase (257 aa).

It belongs to the KdsB family.

It is found in the cytoplasm. The catalysed reaction is 3-deoxy-alpha-D-manno-oct-2-ulosonate + CTP = CMP-3-deoxy-beta-D-manno-octulosonate + diphosphate. The protein operates within nucleotide-sugar biosynthesis; CMP-3-deoxy-D-manno-octulosonate biosynthesis; CMP-3-deoxy-D-manno-octulosonate from 3-deoxy-D-manno-octulosonate and CTP: step 1/1. Its pathway is bacterial outer membrane biogenesis; lipopolysaccharide biosynthesis. Activates KDO (a required 8-carbon sugar) for incorporation into bacterial lipopolysaccharide in Gram-negative bacteria. This is 3-deoxy-manno-octulosonate cytidylyltransferase from Rhodospirillum centenum (strain ATCC 51521 / SW).